Here is a 54-residue protein sequence, read N- to C-terminus: Ovomucoid (54 aa).

The region spanning 4–54 (VDCSDYPRPDCTLEYMPLCGSDNKTYGNKCNFCNAVVDSNGTLTLSHFGKC) is the Kazal-like domain. 3 disulfides stabilise this stretch: Cys6–Cys36, Cys14–Cys33, and Cys22–Cys54. Residue Asn43 is glycosylated (N-linked (GlcNAc...) asparagine).

Its subcellular location is the secreted. The chain is Ovomucoid from Dendrocygna eytoni (Plumed whistling-duck).